The chain runs to 93 residues: Small ribosomal subunit protein uS19 (93 aa).

This sequence belongs to the universal ribosomal protein uS19 family.

Its function is as follows. Protein S19 forms a complex with S13 that binds strongly to the 16S ribosomal RNA. The protein is Small ribosomal subunit protein uS19 of Oleidesulfovibrio alaskensis (strain ATCC BAA-1058 / DSM 17464 / G20) (Desulfovibrio alaskensis).